The chain runs to 130 residues: Small ribosomal subunit protein uS11c (130 aa).

The protein belongs to the universal ribosomal protein uS11 family. In terms of assembly, part of the 30S ribosomal subunit.

The protein resides in the plastid. Its subcellular location is the chloroplast. In Cycas taitungensis (Prince sago), this protein is Small ribosomal subunit protein uS11c.